The following is a 430-amino-acid chain: Sulfide-quinone reductase (430 aa).

FAD contacts are provided by residues 9-13, 34-36, 42-43, and Thr105; these read GGGVG, SDR, and TP. Cys156 serves as the catalytic Cysteine persulfide intermediate. Intrachain disulfides connect Cys280/Cys422 and Cys419/Cys430. FAD is bound by residues Val294 and Gly314. Ile346 provides a ligand contact to a quinone. Catalysis depends on Cys347, which acts as the Cysteine persulfide intermediate. Lys382 contributes to the FAD binding site.

This sequence belongs to the SQRD family. In terms of assembly, homotrimer. Requires FAD as cofactor.

The protein resides in the membrane. The catalysed reaction is n a quinone + n hydrogen sulfide + n H(+) = polysulfur(n-2) + n a quinol. Catalyzes the oxidation of hydrogen sulfide, with the help of a quinone. Consecutive reaction cycles lead to the accumulation of a polysulfide product on the active site Cys residues; these products are released when they exceed a critical length, typically as cyclooctasulfur. This chain is Sulfide-quinone reductase, found in Aquifex aeolicus (strain VF5).